A 20-amino-acid chain; its full sequence is Cytochrome c oxidase subunit 7B-liver, mitochondrial (20 aa).

It belongs to the cytochrome c oxidase VIIb family. Component of the cytochrome c oxidase (complex IV, CIV), a multisubunit enzyme composed of 14 subunits. The complex is composed of a catalytic core of 3 subunits MT-CO1, MT-CO2 and MT-CO3, encoded in the mitochondrial DNA, and 11 supernumerary subunits COX4I, COX5A, COX5B, COX6A, COX6B, COX6C, COX7A, COX7B, COX7C, COX8 and NDUFA4, which are encoded in the nuclear genome. The complex exists as a monomer or a dimer and forms supercomplexes (SCs) in the inner mitochondrial membrane with NADH-ubiquinone oxidoreductase (complex I, CI) and ubiquinol-cytochrome c oxidoreductase (cytochrome b-c1 complex, complex III, CIII), resulting in different assemblies (supercomplex SCI(1)III(2)IV(1) and megacomplex MCI(2)III(2)IV(2)).

The protein resides in the mitochondrion inner membrane. It carries out the reaction 4 Fe(II)-[cytochrome c] + O2 + 8 H(+)(in) = 4 Fe(III)-[cytochrome c] + 2 H2O + 4 H(+)(out). Its pathway is energy metabolism; oxidative phosphorylation. Functionally, component of the cytochrome c oxidase, the last enzyme in the mitochondrial electron transport chain which drives oxidative phosphorylation. The respiratory chain contains 3 multisubunit complexes succinate dehydrogenase (complex II, CII), ubiquinol-cytochrome c oxidoreductase (cytochrome b-c1 complex, complex III, CIII) and cytochrome c oxidase (complex IV, CIV), that cooperate to transfer electrons derived from NADH and succinate to molecular oxygen, creating an electrochemical gradient over the inner membrane that drives transmembrane transport and the ATP synthase. Cytochrome c oxidase is the component of the respiratory chain that catalyzes the reduction of oxygen to water. Electrons originating from reduced cytochrome c in the intermembrane space (IMS) are transferred via the dinuclear copper A center (CU(A)) of subunit 2 and heme A of subunit 1 to the active site in subunit 1, a binuclear center (BNC) formed by heme A3 and copper B (CU(B)). The BNC reduces molecular oxygen to 2 water molecules using 4 electrons from cytochrome c in the IMS and 4 protons from the mitochondrial matrix. The protein is Cytochrome c oxidase subunit 7B-liver, mitochondrial of Thunnus obesus (Bigeye tuna).